Reading from the N-terminus, the 250-residue chain is Nuclear transcription factor Y subunit C-4 (250 aa).

Over residues 1 to 10 the composition is skewed to low complexity; it reads MDNNNNNNNQ. Disordered stretches follow at residues 1-35 and 209-250; these read MDNNNNNNNQQPPPTSVYPPGSAVTTVIPPPPSGS and GVYA…DSQG. Positions 214-225 are enriched in polar residues; it reads PPSQAWQSVWQN. Residues 227 to 242 are compositionally biased toward gly residues; the sequence is AGGGDDVSYGSGGSSG.

Belongs to the NFYC/HAP5 subunit family. Heterotrimeric transcription factor composed of three components, NF-YA, NF-YB and NF-YC. NF-YB and NF-YC must interact and dimerize for NF-YA association and DNA binding. In terms of tissue distribution, ubiquitous. Present in etiolated seedlings.

The protein localises to the nucleus. Stimulates the transcription of various genes by recognizing and binding to a CCAAT motif in promoters. Involved in the abscisic acid (ABA) signaling pathway. This Arabidopsis thaliana (Mouse-ear cress) protein is Nuclear transcription factor Y subunit C-4 (NFYC4).